The chain runs to 245 residues: Alpha carbonic anhydrase 2 (245 aa).

Residues 1 to 23 (MDKISIRCFIFLVLTSFVTTVSC) form the signal peptide. Residues 37-245 (HEFSYEWNQE…THRYFLLFFT (209 aa)) form the Alpha-carbonic anhydrase domain. Cysteines 62 and 222 form a disulfide. The N-linked (GlcNAc...) asparagine glycan is linked to Asn95. Catalysis depends on His103, which acts as the Proton acceptor. N-linked (GlcNAc...) asparagine glycosylation is present at Asn120. 3 residues coordinate Zn(2+): His130, His132, and His149. The N-linked (GlcNAc...) asparagine glycan is linked to Asn156. A substrate-binding site is contributed by 218-219 (TT).

The protein belongs to the alpha-class carbonic anhydrase family. Requires Zn(2+) as cofactor. In terms of processing, N-glycosylated. As to expression, expressed in stems and roots.

The protein localises to the plastid. It localises to the chloroplast stroma. The catalysed reaction is hydrogencarbonate + H(+) = CO2 + H2O. Its function is as follows. Reversible hydration of carbon dioxide. This Arabidopsis thaliana (Mouse-ear cress) protein is Alpha carbonic anhydrase 2 (ACA2).